Here is a 368-residue protein sequence, read N- to C-terminus: CST complex subunit STN1 (368 aa).

The segment at 1-185 (MQPGSSRCEE…KIYDQPFRSS (185 aa)) is interaction with CTC1. A DNA-binding region (OB) is located at residues 57 to 155 (VDVLGTVVGV…EIHATAYYKV (99 aa)). Winged helix-turn-helix (wHTH) stretches follow at residues 191–295 (EALS…YVTR) and 296–368 (EDKD…YTAF).

The protein belongs to the STN1 family. As to quaternary structure, component of the CST complex, composed of TEN1/C17orf106, CTC1/C17orf68 and STN1; in the complex interacts directly with TEN1 and CTC1. Interacts with ACD/TPP1, POT1 and POLA1.

It is found in the nucleus. Its subcellular location is the chromosome. It localises to the telomere. Its function is as follows. Component of the CST complex proposed to act as a specialized replication factor promoting DNA replication under conditions of replication stress or natural replication barriers such as the telomere duplex. The CST complex binds single-stranded DNA with high affinity in a sequence-independent manner, while isolated subunits bind DNA with low affinity by themselves. Initially the CST complex has been proposed to protect telomeres from DNA degradation. However, the CST complex has been shown to be involved in several aspects of telomere replication. The CST complex inhibits telomerase and is involved in telomere length homeostasis; it is proposed to bind to newly telomerase-synthesized 3' overhangs and to terminate telomerase action implicating the association with the ACD:POT1 complex thus interfering with its telomerase stimulation activity. The CST complex is also proposed to be involved in fill-in synthesis of the telomeric C-strand probably implicating recruitment and activation of DNA polymerase alpha. The CST complex facilitates recovery from many forms of exogenous DNA damage; seems to be involved in the re-initiation of DNA replication at repaired forks and/or dormant origins. Required for efficicient replication of the duplex region of the telomere. Promotes efficient replication of lagging-strand telomeres. Promotes general replication start following replication-fork stalling implicating new origin firing. May be in involved in C-strand fill-in during late S/G2 phase independent of its role in telomere duplex replication. The sequence is that of CST complex subunit STN1 from Macaca fascicularis (Crab-eating macaque).